The primary structure comprises 206 residues: Halorhodopsin (206 aa).

Residues I1 to G15 traverse the membrane as a helical segment. Residues R16 to P21 are Cytoplasmic-facing. A helical membrane pass occupies residues R22–V45. Over S46–P75 the chain is Extracellular. The chain crosses the membrane as a helical span at residues W76–A97. Residues G98–N100 lie on the Cytoplasmic side of the membrane. The helical transmembrane segment at M101–T124 threads the bilayer. Over T125–S127 the chain is Extracellular. The helical transmembrane segment at Y128–L150 threads the bilayer. Residues A151–T162 are Cytoplasmic-facing. The helical transmembrane segment at A163–L186 threads the bilayer. Residues G187–D195 lie on the Extracellular side of the membrane. Residues I196–M206 form a helical membrane-spanning segment.

Belongs to the archaeal/bacterial/fungal opsin family.

It localises to the cell membrane. Its function is as follows. Light-driven chloride pump. The polypeptide is Halorhodopsin (hop) (Halobacterium halobium (strain mex)).